A 296-amino-acid polypeptide reads, in one-letter code: 4-hydroxy-tetrahydrodipicolinate synthase (296 aa).

T47 serves as a coordination point for pyruvate. The active-site Proton donor/acceptor is the Y136. K164 functions as the Schiff-base intermediate with substrate in the catalytic mechanism. V206 is a pyruvate binding site.

This sequence belongs to the DapA family. Homotetramer; dimer of dimers.

It is found in the cytoplasm. The enzyme catalyses L-aspartate 4-semialdehyde + pyruvate = (2S,4S)-4-hydroxy-2,3,4,5-tetrahydrodipicolinate + H2O + H(+). It participates in amino-acid biosynthesis; L-lysine biosynthesis via DAP pathway; (S)-tetrahydrodipicolinate from L-aspartate: step 3/4. Functionally, catalyzes the condensation of (S)-aspartate-beta-semialdehyde [(S)-ASA] and pyruvate to 4-hydroxy-tetrahydrodipicolinate (HTPA). In Thermosynechococcus vestitus (strain NIES-2133 / IAM M-273 / BP-1), this protein is 4-hydroxy-tetrahydrodipicolinate synthase.